Here is a 512-residue protein sequence, read N- to C-terminus: ATP synthase subunit alpha (512 aa).

169–176 (GDRQTGKT) is a binding site for ATP.

This sequence belongs to the ATPase alpha/beta chains family. F-type ATPases have 2 components, CF(1) - the catalytic core - and CF(0) - the membrane proton channel. CF(1) has five subunits: alpha(3), beta(3), gamma(1), delta(1), epsilon(1). CF(0) has three main subunits: a(1), b(2) and c(9-12). The alpha and beta chains form an alternating ring which encloses part of the gamma chain. CF(1) is attached to CF(0) by a central stalk formed by the gamma and epsilon chains, while a peripheral stalk is formed by the delta and b chains.

It is found in the cell inner membrane. It catalyses the reaction ATP + H2O + 4 H(+)(in) = ADP + phosphate + 5 H(+)(out). In terms of biological role, produces ATP from ADP in the presence of a proton gradient across the membrane. The alpha chain is a regulatory subunit. The polypeptide is ATP synthase subunit alpha (Aromatoleum aromaticum (strain DSM 19018 / LMG 30748 / EbN1) (Azoarcus sp. (strain EbN1))).